The sequence spans 181 residues: Translationally-controlled tumor protein homolog (181 aa).

The region spanning 1-181 is the TCTP domain; sequence MLIFKDAFTD…VKEALVEEKQ (181 aa).

It belongs to the TCTP family.

It is found in the cytoplasm. In terms of biological role, involved in calcium binding and microtubule stabilization. The polypeptide is Translationally-controlled tumor protein homolog (Wuchereria bancrofti).